We begin with the raw amino-acid sequence, 323 residues long: Fructokinase-1 (323 aa).

Belongs to the carbohydrate kinase PfkB family. Expressed in stems, at higher levels in roots, and hardly detectable in leaves.

The catalysed reaction is D-fructose + ATP = D-fructose 6-phosphate + ADP + H(+). Its pathway is glycan biosynthesis; starch biosynthesis. Its activity is regulated as follows. Inhibited at high fructose. May play an important role in maintaining the flux of carbon towards starch formation in endosperm. May also be involved in a sugar-sensing pathway. The polypeptide is Fructokinase-1 (FRK1) (Zea mays (Maize)).